Consider the following 313-residue polypeptide: Biotin synthase (313 aa).

One can recognise a Radical SAM core domain in the interval 37–263; it reads YYGKKVKLNM…INPTKEIRIA (227 aa). [4Fe-4S] cluster contacts are provided by Cys55, Cys59, and Cys62. [2Fe-2S] cluster is bound by residues Cys98, Cys131, Cys191, and Arg261.

The protein belongs to the radical SAM superfamily. Biotin synthase family. Homodimer. [4Fe-4S] cluster serves as cofactor. [2Fe-2S] cluster is required as a cofactor.

It catalyses the reaction (4R,5S)-dethiobiotin + (sulfur carrier)-SH + 2 reduced [2Fe-2S]-[ferredoxin] + 2 S-adenosyl-L-methionine = (sulfur carrier)-H + biotin + 2 5'-deoxyadenosine + 2 L-methionine + 2 oxidized [2Fe-2S]-[ferredoxin]. It functions in the pathway cofactor biosynthesis; biotin biosynthesis; biotin from 7,8-diaminononanoate: step 2/2. Functionally, catalyzes the conversion of dethiobiotin (DTB) to biotin by the insertion of a sulfur atom into dethiobiotin via a radical-based mechanism. The protein is Biotin synthase of Staphylococcus epidermidis (strain ATCC 12228 / FDA PCI 1200).